A 1151-amino-acid chain; its full sequence is Syntaxin-binding protein 5 (1151 aa).

The interval 14-34 (TAGSSSASQQQQQQHPPGNRE) is disordered. A compositionally biased stretch (low complexity) spans 17-27 (SSSASQQQQQQ). WD repeat units follow at residues 61-94 (SALA…CYCQ), 101-140 (VIQL…SLKF), 145-181 (VTFC…GYVI), 200-234 (HISD…DYRY), 240-272 (IHSV…PAKP), 294-336 (PILK…KSTA), 344-378 (IVDF…LIDL), 400-477 (TCCE…YKLK), 505-619 (QIIS…ELVI), and 633-695 (TSLA…SGAG). Disordered regions lie at residues 555–595 (ETPE…GLRD) and 674–729 (SNDP…EQKM). Serine 692 is subject to Phosphoserine. A compositionally biased stretch (low complexity) spans 712-721 (SPTSGSSSPH). Serine 723 bears the Phosphoserine; by PKA mark. Residue serine 759 is modified to Phosphoserine. A Phosphothreonine modification is found at threonine 762. At serine 782 the chain carries Phosphoserine. The residue at position 784 (threonine 784) is a Phosphothreonine. Serine 785 is subject to Phosphoserine. 4 WD repeats span residues 794–851 (ISAL…SGTI), 860–934 (RMAF…QNCA), 939–983 (ITET…LDVY), and 997–1020 (CFTN…TYSQ). The segment covering 881–892 (HNVPEEKDEKEK) has biased composition (basic and acidic residues). Positions 881 to 906 (HNVPEEKDEKEKLKKRRPVSVSPSSS) are disordered. Serine 900 and serine 902 each carry phosphoserine. Threonine 1039 carries the post-translational modification Phosphothreonine. Phosphoserine is present on residues serine 1058 and serine 1131. The region spanning 1086–1146 (GIEGVKGAAS…HEIMLKYKDK (61 aa)) is the v-SNARE coiled-coil homology domain.

The protein belongs to the WD repeat L(2)GL family. As to quaternary structure, interacts with STX1A and STX1B via its v-SNARE homology domain. Part of a complex that contains STX1, STXBP5, SNAP25 and SYT1. Part of a complex that contains STXBP5, STX4A and SNAP23.

It localises to the cytoplasm. It is found in the cell membrane. The protein resides in the cytoplasmic vesicle membrane. The protein localises to the cytoplasmic vesicle. Its subcellular location is the secretory vesicle. It localises to the synaptic vesicle. It is found in the synapse. In terms of biological role, plays a regulatory role in calcium-dependent exocytosis and neurotransmitter release. Inhibits membrane fusion between transport vesicles and the plasma membrane. May modulate the assembly of trans-SNARE complexes between transport vesicles and the plasma membrane. Inhibits translocation of GLUT4 from intracellular vesicles to the plasma membrane. Competes with STXBP1 for STX1 binding. The chain is Syntaxin-binding protein 5 (STXBP5) from Homo sapiens (Human).